Reading from the N-terminus, the 181-residue chain is Protein CENTRORADIALIS (181 aa).

It belongs to the phosphatidylethanolamine-binding protein family. In terms of assembly, may form homodimers in solution.

The protein localises to the cytoplasm. Its function is as follows. Expression of CEN leads to a morphological switch between shoot growth and the development of flower structures (inflorescence). May form complexes with phosphorylated ligands by interfering with kinases and their effectors. The chain is Protein CENTRORADIALIS (CEN) from Antirrhinum majus (Garden snapdragon).